The sequence spans 83 residues: Sulfur carrier protein TusA (83 aa).

Catalysis depends on Cys-19, which acts as the Cysteine persulfide intermediate.

The protein belongs to the sulfur carrier protein TusA family.

It is found in the cytoplasm. Sulfur carrier protein which probably makes part of a sulfur-relay system. The chain is Sulfur carrier protein TusA from Aliivibrio fischeri (strain ATCC 700601 / ES114) (Vibrio fischeri).